The following is a 430-amino-acid chain: Proteasome-activating nucleotidase (430 aa).

Residues 9-89 (TELKKEKKAF…LRRELDRMRV (81 aa)) adopt a coiled-coil conformation. ATP-binding positions include 214–219 (GTGKTL) and His353. The tract at residues 428-430 (LYR) is docks into pockets in the proteasome alpha-ring to cause gate opening.

This sequence belongs to the AAA ATPase family. In terms of assembly, homohexamer. The hexameric complex has a two-ring architecture resembling a top hat that caps the 20S proteasome core at one or both ends. Alone, can form a complex composed of two stacked hexameric rings in vitro. Upon ATP-binding, the C-terminus of PAN interacts with the alpha-rings of the proteasome core by binding to the intersubunit pockets.

It is found in the cytoplasm. Its activity is regulated as follows. ATPase activity is inhibited by EDTA, N-ethylmaleimide (NEM) and p-chloromercuriphenyl-sulfonic acid (PCMS) in vitro. In terms of biological role, ATPase which is responsible for recognizing, binding, unfolding and translocation of substrate proteins into the archaeal 20S proteasome core particle. Is essential for opening the gate of the 20S proteasome via an interaction with its C-terminus, thereby allowing substrate entry and access to the site of proteolysis. Thus, the C-termini of the proteasomal ATPase function like a 'key in a lock' to induce gate opening and therefore regulate proteolysis. Unfolding activity requires energy from ATP hydrolysis, whereas ATP binding alone promotes ATPase-20S proteasome association which triggers gate opening, and supports translocation of unfolded substrates. In addition to ATP, is able to cleave other nucleotide triphosphates such as CTP, GTP and UTP, but hydrolysis of these other nucleotides is less effective in promoting proteolysis than ATP. Moreover, PAN by itself can function as a chaperone in vitro. This chain is Proteasome-activating nucleotidase, found in Methanocaldococcus jannaschii (strain ATCC 43067 / DSM 2661 / JAL-1 / JCM 10045 / NBRC 100440) (Methanococcus jannaschii).